Consider the following 329-residue polypeptide: NADH-quinone oxidoreductase subunit H (329 aa).

9 helical membrane passes run 9 to 29 (LIKILILVAVFSALGGFATYI), 42 to 62 (GPCYVGPFGLLQVAADGIKLF), 75 to 95 (FIFTLAPIIAMVSAFVSMAPI), 117 to 137 (IGFLFFLAVGSAGIYAPILAG), 154 to 174 (IQLLSFEVVSTLTILAPLMVV), 188 to 208 (GGFLDWLVFKQPLAFVLFLIA), 238 to 258 (LKWGMFFLAEYAHLFAFSFVI), 269 to 291 (WGFIPGGIAILIKAGFFVFLSMW), and 309 to 329 (WKIMLPLALLNIVLTGIIILI).

It belongs to the complex I subunit 1 family. As to quaternary structure, NDH-1 is composed of 14 different subunits. Subunits NuoA, H, J, K, L, M, N constitute the membrane sector of the complex.

It is found in the cell inner membrane. The enzyme catalyses a quinone + NADH + 5 H(+)(in) = a quinol + NAD(+) + 4 H(+)(out). Its function is as follows. NDH-1 shuttles electrons from NADH, via FMN and iron-sulfur (Fe-S) centers, to quinones in the respiratory chain. The immediate electron acceptor for the enzyme in this species is believed to be ubiquinone. Couples the redox reaction to proton translocation (for every two electrons transferred, four hydrogen ions are translocated across the cytoplasmic membrane), and thus conserves the redox energy in a proton gradient. This subunit may bind ubiquinone. This Helicobacter pylori (strain ATCC 700392 / 26695) (Campylobacter pylori) protein is NADH-quinone oxidoreductase subunit H.